The chain runs to 319 residues: Beta-ketoacyl-[acyl-carrier-protein] synthase III (319 aa).

Residues Cys112 and His246 contribute to the active site. Residues 247–251 form an ACP-binding region; it reads QANFR. Asn276 is a catalytic residue.

It belongs to the thiolase-like superfamily. FabH family. Homodimer.

The protein localises to the cytoplasm. The enzyme catalyses malonyl-[ACP] + acetyl-CoA + H(+) = 3-oxobutanoyl-[ACP] + CO2 + CoA. Its pathway is lipid metabolism; fatty acid biosynthesis. Catalyzes the condensation reaction of fatty acid synthesis by the addition to an acyl acceptor of two carbons from malonyl-ACP. Catalyzes the first condensation reaction which initiates fatty acid synthesis and may therefore play a role in governing the total rate of fatty acid production. Possesses both acetoacetyl-ACP synthase and acetyl transacylase activities. Its substrate specificity determines the biosynthesis of branched-chain and/or straight-chain of fatty acids. This is Beta-ketoacyl-[acyl-carrier-protein] synthase III from Pseudoalteromonas atlantica (strain T6c / ATCC BAA-1087).